Reading from the N-terminus, the 249-residue chain is ATP synthase subunit a (249 aa).

Transmembrane regions (helical) follow at residues 33–53 (GQVI…SIAA), 92–112 (LPFI…GALI), 131–151 (INTT…AGIS), 196–216 (LVVA…LMAL), and 217–237 (GLFT…AYIH).

Belongs to the ATPase A chain family. As to quaternary structure, F-type ATPases have 2 components, CF(1) - the catalytic core - and CF(0) - the membrane proton channel. CF(1) has five subunits: alpha(3), beta(3), gamma(1), delta(1), epsilon(1). CF(0) has four main subunits: a, b, b' and c.

The protein resides in the cellular thylakoid membrane. In terms of biological role, key component of the proton channel; it plays a direct role in the translocation of protons across the membrane. This is ATP synthase subunit a from Microcystis aeruginosa (strain NIES-843 / IAM M-2473).